Consider the following 129-residue polypeptide: MRKLFFCGVLALAVAFALPVVAAPKAPADGLKMEATKQPVVFNHSTHKSVKCGDCHHPVNGKEDYRKCGTAGCHDSMDKKDKSAKGYYHVMHDKNTKFKSCVGCHVEVAGADAAKKKDLTGCKKSKCHE.

A signal peptide spans Met1–Ala22. Heme c is bound by residues His44, His47, Cys52, Cys55, His56, His57, Cys68, Cys73, His74, His92, Cys101, Cys104, His105, Cys122, Cys127, and His128.

Post-translationally, binds 4 heme c groups per subunit.

The protein resides in the periplasm. Its function is as follows. Participates in sulfate respiration coupled with phosphorylation by transferring electrons from the enzyme dehydrogenase to ferredoxin. The protein is Cytochrome c3 of Nitratidesulfovibrio vulgaris (strain ATCC 29579 / DSM 644 / CCUG 34227 / NCIMB 8303 / VKM B-1760 / Hildenborough) (Desulfovibrio vulgaris).